A 382-amino-acid polypeptide reads, in one-letter code: Mannitol-1-phosphate 5-dehydrogenase (382 aa).

3-14 provides a ligand contact to NAD(+); the sequence is ALHFGAGNIGRG. K269 is modified (N6-acetyllysine).

Belongs to the mannitol dehydrogenase family.

The catalysed reaction is D-mannitol 1-phosphate + NAD(+) = beta-D-fructose 6-phosphate + NADH + H(+). The chain is Mannitol-1-phosphate 5-dehydrogenase from Escherichia coli O81 (strain ED1a).